Consider the following 96-residue polypeptide: MDYTQILVKPLVSEKATFVKEQAQQVVFFVNPRANKIEIKKAVEAAFKVKVTDVNVITKKPSDKVRQGRVVGRISGCKKAYVTLAPGEKIEFFEGV.

Belongs to the universal ribosomal protein uL23 family. Part of the 50S ribosomal subunit. Contacts protein L29, and trigger factor when it is bound to the ribosome.

Its function is as follows. One of the early assembly proteins it binds 23S rRNA. One of the proteins that surrounds the polypeptide exit tunnel on the outside of the ribosome. Forms the main docking site for trigger factor binding to the ribosome. In Nitratidesulfovibrio vulgaris (strain DSM 19637 / Miyazaki F) (Desulfovibrio vulgaris), this protein is Large ribosomal subunit protein uL23.